Reading from the N-terminus, the 508-residue chain is Photosystem II CP47 reaction center protein (508 aa).

The next 6 helical transmembrane spans lie at 21-36, 101-115, 140-156, 203-218, 237-252, and 457-472; these read SVHI…WAGS, IVFS…IWHW, GIHL…FGAF, IAAG…FHLS, VLSS…AFVV, and SFAL…HGAR.

Belongs to the PsbB/PsbC family. PsbB subfamily. As to quaternary structure, PSII is composed of 1 copy each of membrane proteins PsbA, PsbB, PsbC, PsbD, PsbE, PsbF, PsbH, PsbI, PsbJ, PsbK, PsbL, PsbM, PsbT, PsbX, PsbY, PsbZ, Psb30/Ycf12, at least 3 peripheral proteins of the oxygen-evolving complex and a large number of cofactors. It forms dimeric complexes. Requires Binds multiple chlorophylls. PSII binds additional chlorophylls, carotenoids and specific lipids. as cofactor.

Its subcellular location is the plastid. It is found in the chloroplast thylakoid membrane. Its function is as follows. One of the components of the core complex of photosystem II (PSII). It binds chlorophyll and helps catalyze the primary light-induced photochemical processes of PSII. PSII is a light-driven water:plastoquinone oxidoreductase, using light energy to abstract electrons from H(2)O, generating O(2) and a proton gradient subsequently used for ATP formation. The protein is Photosystem II CP47 reaction center protein of Illicium oligandrum (Star anise).